A 198-amino-acid chain; its full sequence is Phosphoheptose isomerase (198 aa).

The region spanning 40–198 (IIGALRGGHK…IEAALMQDAR (159 aa)) is the SIS domain. Substrate is bound at residue 55-57 (NGG). Zn(2+) contacts are provided by His-64 and Glu-68. Residues Glu-68, 97-98 (ND), 123-125 (STS), Ser-128, and Gln-175 each bind substrate. The Zn(2+) site is built by Gln-175 and His-183.

The protein belongs to the SIS family. GmhA subfamily. In terms of assembly, homotetramer. It depends on Zn(2+) as a cofactor.

It is found in the cytoplasm. It carries out the reaction 2 D-sedoheptulose 7-phosphate = D-glycero-alpha-D-manno-heptose 7-phosphate + D-glycero-beta-D-manno-heptose 7-phosphate. The protein operates within carbohydrate biosynthesis; D-glycero-D-manno-heptose 7-phosphate biosynthesis; D-glycero-alpha-D-manno-heptose 7-phosphate and D-glycero-beta-D-manno-heptose 7-phosphate from sedoheptulose 7-phosphate: step 1/1. Its function is as follows. Catalyzes the isomerization of sedoheptulose 7-phosphate in D-glycero-D-manno-heptose 7-phosphate. The polypeptide is Phosphoheptose isomerase (Bradyrhizobium sp. (strain ORS 278)).